The following is a 457-amino-acid chain: tRNA-2-methylthio-N(6)-dimethylallyladenosine synthase (457 aa).

In terms of domain architecture, MTTase N-terminal spans 19-134; sequence RKLFIETYGC…LPNLVGAVEH (116 aa). Positions 28, 64, 98, 172, 176, and 179 each coordinate [4Fe-4S] cluster. Positions 158–390 constitute a Radical SAM core domain; sequence PGVHISGFVS…IDLQNKLSEE (233 aa). The TRAM domain maps to 393-456; sequence LRDIGKTFEV…SATLFGEPVE (64 aa).

It belongs to the methylthiotransferase family. MiaB subfamily. Monomer. [4Fe-4S] cluster serves as cofactor.

The protein resides in the cytoplasm. It carries out the reaction N(6)-dimethylallyladenosine(37) in tRNA + (sulfur carrier)-SH + AH2 + 2 S-adenosyl-L-methionine = 2-methylsulfanyl-N(6)-dimethylallyladenosine(37) in tRNA + (sulfur carrier)-H + 5'-deoxyadenosine + L-methionine + A + S-adenosyl-L-homocysteine + 2 H(+). In terms of biological role, catalyzes the methylthiolation of N6-(dimethylallyl)adenosine (i(6)A), leading to the formation of 2-methylthio-N6-(dimethylallyl)adenosine (ms(2)i(6)A) at position 37 in tRNAs that read codons beginning with uridine. This chain is tRNA-2-methylthio-N(6)-dimethylallyladenosine synthase, found in Parabacteroides distasonis (strain ATCC 8503 / DSM 20701 / CIP 104284 / JCM 5825 / NCTC 11152).